Reading from the N-terminus, the 108-residue chain is Protein ORFa in retron Ec67 (108 aa).

The protein is Protein ORFa in retron Ec67 of Escherichia coli.